The primary structure comprises 228 residues: Heptaprenylglyceryl phosphate synthase (228 aa).

Lys-12 provides a ligand contact to sn-glycerol 1-phosphate. The Mg(2+) site is built by Asp-14 and Ser-40. Sn-glycerol 1-phosphate-binding positions include 159 to 164 (YLEYSG), Gly-189, and 209 to 210 (GN).

The protein belongs to the GGGP/HepGP synthase family. Group I subfamily. In terms of assembly, homodimer. Mg(2+) is required as a cofactor.

The enzyme catalyses sn-glycerol 1-phosphate + all-trans-heptaprenyl diphosphate = 3-heptaprenyl-sn-glycero-1-phosphate + diphosphate. Its pathway is membrane lipid metabolism; glycerophospholipid metabolism. In terms of biological role, prenyltransferase that catalyzes in vivo the transfer of the heptaprenyl moiety of heptaprenyl pyrophosphate (HepPP; 35 carbon atoms) to the C3 hydroxyl of sn-glycerol-1-phosphate (G1P), producing heptaprenylglyceryl phosphate (HepGP). This reaction is an ether-bond-formation step in the biosynthesis of archaea-type G1P-based membrane lipids found in Bacillales. In Bacillus licheniformis (strain ATCC 14580 / DSM 13 / JCM 2505 / CCUG 7422 / NBRC 12200 / NCIMB 9375 / NCTC 10341 / NRRL NRS-1264 / Gibson 46), this protein is Heptaprenylglyceryl phosphate synthase.